The sequence spans 461 residues: Aspartic proteinase NANA, chloroplast (461 aa).

Asn-86 carries N-linked (GlcNAc...) asparagine glycosylation. In terms of domain architecture, Peptidase A1 spans Tyr-106–Ala-456. Asp-124 is an active-site residue. The N-linked (GlcNAc...) asparagine glycan is linked to Asn-274. Asp-338 is a catalytic residue. Residue Asn-386 is glycosylated (N-linked (GlcNAc...) asparagine).

This sequence belongs to the peptidase A1 family.

The protein resides in the plastid. Its subcellular location is the chloroplast. Repressed by pepstatin A. Its function is as follows. Aspartic proteinase that can use azocasein as substrate and regulates endogenous sugar levels (e.g. sucrose, glucose and fructose) by modulating starch accumulation and remobilization. Influences general morphology and development. In Arabidopsis thaliana (Mouse-ear cress), this protein is Aspartic proteinase NANA, chloroplast.